The following is a 449-amino-acid chain: Probable magnetosome protein Mms48 (449 aa).

Positions 1-18 (MLLRLIVLLIFMSPVVFA) are cleaved as a signal peptide. The chain crosses the membrane as a helical span at residues 40–60 (SNMPVLLAVILVVFLIFSALS). The TPR repeat unit spans residues 323–356 (PDGHLAAGEAAFAVQKWGVARRHIMAALKIAPDA).

It localises to the magnetosome membrane. In terms of biological role, overexpression in wild-type cells increases the number of cells with double magnetosome chains significantly. The 4 genes of this operon collectively influence magnetosome size and number. This Magnetospirillum gryphiswaldense (strain DSM 6361 / JCM 21280 / NBRC 15271 / MSR-1) protein is Probable magnetosome protein Mms48.